Here is a 267-residue protein sequence, read N- to C-terminus: MGRSPCCEKAHTNKGAWTKEEDDRLTAYIKAHGEGCWRSLPKAAGLLRCGKSCRLRWINYLRPDLKRGNFSHEEDELIIKLHSLLGNKWSLIAGRLPGRTDNEIKNYWNTHIRRKLTSRGIDPVTHRAINSDHAASNITISFESAQRDDKGAVFRRDAEPAKAAAAAAAISHHVDHHHRSNPQLDWGQGKPLKCPDLNLDLCISPPIHEDPMVDTKPVVKREAGVGVGVVGLCFSCSMGLPRSSDCKCSSFMGLRTAMLDFRSIEMK.

2 HTH myb-type domains span residues 9–61 and 62–116; these read KAHT…INYL and RPDL…RRKL. 2 DNA-binding regions (H-T-H motif) span residues 37 to 61 and 89 to 112; these read WRSL…INYL and WSLI…NTHI.

As to expression, germinating seed and apical meristem of shoot and root.

The protein localises to the nucleus. Functionally, possible transcription activator in response to an external signal. May be involved in the regulation of flavonoid biosynthesis. The sequence is that of Myb-related protein Hv1 (MYB1) from Hordeum vulgare (Barley).